We begin with the raw amino-acid sequence, 367 residues long: Tetraprenyl-beta-curcumene synthase (367 aa).

It belongs to the large terpene synthase family.

The catalysed reaction is all-trans-heptaprenyl diphosphate = (R)-tetraprenyl-beta-curcumene + diphosphate. Functionally, catalyzes the transformation of a linear C35 prenyl diphosphate chain to form tetraprenyl-beta-curcumene. The polypeptide is Tetraprenyl-beta-curcumene synthase (ytpB) (Bacillus subtilis (strain 168)).